Reading from the N-terminus, the 245-residue chain is Carbohydrate deacetylase 1 (245 aa).

Mg(2+) contacts are provided by His59 and His125.

Belongs to the YdjC deacetylase family. In terms of assembly, homodimer. The cofactor is Mg(2+).

Probably catalyzes the deacetylation of acetylated carbohydrates an important step in the degradation of oligosaccharides. In Listeria innocua serovar 6a (strain ATCC BAA-680 / CLIP 11262), this protein is Carbohydrate deacetylase 1.